Here is a 186-residue protein sequence, read N- to C-terminus: MNSHSEALFEINQRLSSHIRTMSNFPVFDPQKITNDVEANIKRMTSILKSKRLTREDEDLMKMINDCSKVLHEMLLERIMLQQDSIQFFTEKEASDSPFSNSADTIDEDDDKKIKSRRLTKKQLLVLEGWFQKHKNHPYSQKDQTNLLIKSTKLSKSQVQNWISNRRRKEKNTKVSPELAALLLTG.

The homeobox; TALE-type DNA-binding region spans 112–174 (KKIKSRRLTK…NRRRKEKNTK (63 aa)).

Belongs to the TALE/M-ATYP homeobox family. Forms a heterodimer with A1.

It localises to the nucleus. Its function is as follows. Mating type proteins are sequence specific DNA-binding proteins that act as master switches in yeast differentiation by controlling gene expression in a cell type-specific fashion. Transcriptional corepressor that acts in conjunction with A1 to repress transcription both of homozygote-specific genes and of genes necessary for the white-opaque switch, a prerequisite for mating. The chain is Mating-type-like protein ALPHA2 (MTLALPHA2) from Candida albicans (strain SC5314 / ATCC MYA-2876) (Yeast).